Here is a 458-residue protein sequence, read N- to C-terminus: Biphenyl dioxygenase subunit alpha (458 aa).

Residues 58-156 form the Rieske domain; it reads WLLLGHESHV…KEGDCGFDKA (99 aa). [2Fe-2S] cluster-binding residues include Cys100, His102, Cys120, and His123. Positions 233 and 239 each coordinate Fe cation.

It belongs to the bacterial ring-hydroxylating dioxygenase alpha subunit family. In terms of assembly, heterohexamer consisting of three BphA subunits and three BphE subunits. A ferredoxin (BphF) and a ferredoxin reductase (BphG) must be present to obtain activity. The cofactor is [2Fe-2S] cluster. Fe cation is required as a cofactor.

It catalyses the reaction biphenyl + NADH + O2 + H(+) = (2R,3S)-3-phenylcyclohexa-3,5-diene-1,2-diol + NAD(+). It participates in xenobiotic degradation; biphenyl degradation; 2-hydroxy-2,4-pentadienoate and benzoate from biphenyl: step 1/4. This chain is Biphenyl dioxygenase subunit alpha (bphA), found in Metapseudomonas furukawaii (Pseudomonas furukawaii).